Consider the following 449-residue polypeptide: Phosphoglucosamine mutase (449 aa).

The active-site Phosphoserine intermediate is the S101. Positions 101, 243, 245, and 247 each coordinate Mg(2+). Residue S101 is modified to Phosphoserine.

This sequence belongs to the phosphohexose mutase family. Mg(2+) serves as cofactor. Post-translationally, activated by phosphorylation.

The enzyme catalyses alpha-D-glucosamine 1-phosphate = D-glucosamine 6-phosphate. In terms of biological role, catalyzes the conversion of glucosamine-6-phosphate to glucosamine-1-phosphate. This is Phosphoglucosamine mutase from Syntrophobacter fumaroxidans (strain DSM 10017 / MPOB).